The primary structure comprises 133 residues: Norrin (133 aa).

The first 24 residues, 1-24, serve as a signal peptide directing secretion; that stretch reads MRKHVLAASFSMLSLLVIMGDTDS. 4 disulfide bridges follow: C39-C96, C55-C110, C65-C126, and C69-C128. Residues 39–132 enclose the CTCK domain; that stretch reads CMRHHYVDSI…ILSCHCEECN (94 aa).

In terms of assembly, homodimer; disulfide-linked. Component of a complex, at least composed of TSPAN12, FZD4, LRP5/6 and norrin (NDP). Binds FZD4 with high affinity. Interacts with LRP6 (via Beta-propellers 1 and 2). As to expression, expressed in the outer nuclear, inner nuclear and ganglion cell layers of the retina, and in fetal and adult brain.

The protein localises to the secreted. In terms of biological role, activates the canonical Wnt signaling pathway through FZD4 and LRP5 coreceptor. Plays a central role in retinal vascularization by acting as a ligand for FZD4 that signals via stabilizing beta-catenin (CTNNB1) and activating LEF/TCF-mediated transcriptional programs. Acts in concert with TSPAN12 to activate FZD4 independently of the Wnt-dependent activation of FZD4, suggesting the existence of a Wnt-independent signaling that also promote accumulation the beta-catenin (CTNNB1). May be involved in a pathway that regulates neural cell differentiation and proliferation. Possible role in neuroectodermal cell-cell interaction. This chain is Norrin (NDP), found in Homo sapiens (Human).